We begin with the raw amino-acid sequence, 298 residues long: Iron/alpha-ketoglutarate-dependent dioxygenase ausO (298 aa).

3 residues coordinate Fe cation: His-130, Asp-132, and His-211.

The protein belongs to the PhyH family. As to quaternary structure, homodimer. The cofactor is Fe cation.

The protein operates within secondary metabolite biosynthesis; terpenoid biosynthesis. In terms of biological role, iron/alpha-ketoglutarate-dependent dioxygenase; part of the gene cluster that mediates the biosynthesis of calidodehydroaustin, a fungal meroterpenoid. The first step of the pathway is the synthesis of 3,5-dimethylorsellinic acid by the polyketide synthase ausA. 3,5-dimethylorsellinic acid is then prenylated by the polyprenyl transferase ausN. Further epoxidation by the FAD-dependent monooxygenase ausM and cyclization by the probable terpene cyclase ausL lead to the formation of protoaustinoid A. Protoaustinoid A is then oxidized to spiro-lactone preaustinoid A3 by the combined action of the FAD-binding monooxygenases ausB and ausC, and the dioxygenase ausE. Acid-catalyzed keto-rearrangement and ring contraction of the tetraketide portion of preaustinoid A3 by ausJ lead to the formation of preaustinoid A4. The aldo-keto reductase ausK, with the help of ausH, is involved in the next step by transforming preaustinoid A4 into isoaustinone which is in turn hydroxylated by the P450 monooxygenase ausI to form austinolide. The cytochrome P450 monooxygenase ausG modifies austinolide to austinol. Austinol is further acetylated to austin by the O-acetyltransferase ausP, which spontaneously changes to dehydroaustin. The cytochrome P450 monooxygenase ausR then converts dehydroaustin is into 7-dehydrodehydroaustin. The hydroxylation catalyzed by ausR permits the O-acetyltransferase ausQ to add an additional acetyl group to the molecule, leading to the formation of acetoxydehydroaustin. The short chain dehydrogenase ausT catalyzes the reduction of the double bond present between carbon atoms 1 and 2 to convert 7-dehydrodehydroaustin into 1,2-dihydro-7-hydroxydehydroaustin. AusQ catalyzes not only an acetylation reaction but also the addition of the PKS ausV diketide product to 1,2-dihydro-7-hydroxydehydroaustin, forming precalidodehydroaustin. Finally, the iron/alpha-ketoglutarate-dependent dioxygenase converts precalidodehydroaustin into calidodehydroaustin. In Aspergillus calidoustus, this protein is Iron/alpha-ketoglutarate-dependent dioxygenase ausO.